The following is a 356-amino-acid chain: Manganese-dependent ADP-ribose/CDP-alcohol diphosphatase (356 aa).

7 residues coordinate Zn(2+): aspartate 32, glutamine 34, aspartate 81, asparagine 117, histidine 253, histidine 290, and histidine 292.

Belongs to the ADPRibase-Mn family. In terms of assembly, monomer. Requires Mg(2+) as cofactor.

The enzyme catalyses CDP-choline + H2O = phosphocholine + CMP + 2 H(+). It carries out the reaction ADP-D-ribose + H2O = D-ribose 5-phosphate + AMP + 2 H(+). The catalysed reaction is CDP-glycerol + H2O = sn-glycerol 3-phosphate + CMP + 2 H(+). Functionally, hydrolyzes ADP-ribose, IDP-ribose, CDP-glycerol, CDP-choline and CDP-ethanolamine, but not other non-reducing ADP-sugars or CDP-glucose. The protein is Manganese-dependent ADP-ribose/CDP-alcohol diphosphatase (adprm) of Xenopus laevis (African clawed frog).